Reading from the N-terminus, the 167-residue chain is NAD(P)H-quinone oxidoreductase subunit I, chloroplastic (167 aa).

2 consecutive 4Fe-4S ferredoxin-type domains span residues 55–84 and 95–124; these read GRIHFEFDKCIACEVCVRVCPIDLPVVDWK and LNYSIDFGICIFCGNCVEYCPTNCLSMTEE. Positions 64, 67, 70, 74, 104, 107, 110, and 114 each coordinate [4Fe-4S] cluster.

This sequence belongs to the complex I 23 kDa subunit family. In terms of assembly, NDH is composed of at least 16 different subunits, 5 of which are encoded in the nucleus. [4Fe-4S] cluster is required as a cofactor.

Its subcellular location is the plastid. It localises to the chloroplast thylakoid membrane. The catalysed reaction is a plastoquinone + NADH + (n+1) H(+)(in) = a plastoquinol + NAD(+) + n H(+)(out). It carries out the reaction a plastoquinone + NADPH + (n+1) H(+)(in) = a plastoquinol + NADP(+) + n H(+)(out). Functionally, NDH shuttles electrons from NAD(P)H:plastoquinone, via FMN and iron-sulfur (Fe-S) centers, to quinones in the photosynthetic chain and possibly in a chloroplast respiratory chain. The immediate electron acceptor for the enzyme in this species is believed to be plastoquinone. Couples the redox reaction to proton translocation, and thus conserves the redox energy in a proton gradient. The polypeptide is NAD(P)H-quinone oxidoreductase subunit I, chloroplastic (Panax ginseng (Korean ginseng)).